Here is a 399-residue protein sequence, read N- to C-terminus: Probable peptidoglycan glycosyltransferase FtsW (399 aa).

9 helical membrane passes run 33-53 (LVWL…STSI), 71-91 (IFYF…PIIF), 98-118 (IILI…HSIH), 160-180 (FWGF…LLAE), 182-202 (DLGT…LSGA), 204-224 (IGQF…LILL), 287-307 (IIGE…IFTI), 324-344 (IFSG…TSIN), and 359-379 (LPFI…IFFL).

It belongs to the SEDS family. FtsW subfamily.

The protein localises to the cell inner membrane. It carries out the reaction [GlcNAc-(1-&gt;4)-Mur2Ac(oyl-L-Ala-gamma-D-Glu-L-Lys-D-Ala-D-Ala)](n)-di-trans,octa-cis-undecaprenyl diphosphate + beta-D-GlcNAc-(1-&gt;4)-Mur2Ac(oyl-L-Ala-gamma-D-Glu-L-Lys-D-Ala-D-Ala)-di-trans,octa-cis-undecaprenyl diphosphate = [GlcNAc-(1-&gt;4)-Mur2Ac(oyl-L-Ala-gamma-D-Glu-L-Lys-D-Ala-D-Ala)](n+1)-di-trans,octa-cis-undecaprenyl diphosphate + di-trans,octa-cis-undecaprenyl diphosphate + H(+). It participates in cell wall biogenesis; peptidoglycan biosynthesis. Peptidoglycan polymerase that is essential for cell division. This is Probable peptidoglycan glycosyltransferase FtsW from Buchnera aphidicola subsp. Acyrthosiphon pisum (strain APS) (Acyrthosiphon pisum symbiotic bacterium).